We begin with the raw amino-acid sequence, 756 residues long: Transient receptor potential cation channel subfamily V member 2 (756 aa).

A disordered region spans residues 1–45 (MTSASNPPAFRLETSDGDEEGSAEVNKGKNEPPPMESPFQGEDRN). A required for interaction with SLC50A1 region spans residues 1–385 (MTSASNPPAF…LLQEKWDRLI (385 aa)). Topologically, residues 1 to 387 (MTSASNPPAF…QEKWDRLIPR (387 aa)) are cytoplasmic. 2 positions are modified to phosphoserine: S15 and S77. ANK repeat units lie at residues 68–110 (NRFD…TEGS), 111–157 (TGKT…DEFY), 158–203 (RGHS…TCFY), 204–239 (FGELPLSLAACTKQWDVVTYLLENPHQPASLEATDS), 240–288 (LGNT…ICNH), and 289–315 (QGLTPLKLAAKEGKIEIFRHILQREFS). Residues 388–408 (FFFNFACYLVYMIIFTIVAYH) traverse the membrane as a helical segment. At 409–428 (QPSLEQPAIPSSKATFGDSM) the chain is on the extracellular side. The helical transmembrane segment at 429-449 (LLLGHILILLGGIYLLLGQLW) threads the bilayer. Topologically, residues 450-455 (YFWRRR) are cytoplasmic. A helical transmembrane segment spans residues 456–476 (LFIWISFMDSYFEILFLVQAL). The Extracellular portion of the chain corresponds to 477–490 (LTVLSQVLRFVETE). The chain crosses the membrane as a helical span at residues 491–511 (WYLPLLVSSLVLGWLNLLYYT). The Cytoplasmic portion of the chain corresponds to 512–532 (RGFQHTGIYSVMIQKVILRDL). Residues 533 to 553 (LRFLLVYLVFLFGFAVALVSL) form a helical membrane-spanning segment. The tract at residues 559-583 (SPKAPEDSNTTVTEKPTLGQEEEPV) is disordered. An N-linked (GlcNAc...) asparagine glycan is attached at N567. Residues 568-604 (TTVTEKPTLGQEEEPVPYGGILDASLELFKFTIGMGE) constitute an intramembrane region (pore-forming). Residues 617–637 (VLLLLLAYVLLTYVLLLNMLI) traverse the membrane as a helical segment. Residues 638-756 (ALMSETVNSV…HLPLQVLQSH (119 aa)) lie on the Cytoplasmic side of the membrane. The tract at residues 719–756 (EDPSGAGITGYKKNPTSKPGKNSASEEDHLPLQVLQSH) is disordered. Polar residues predominate over residues 732 to 741 (NPTSKPGKNS). Phosphoserine occurs at positions 743 and 755.

It belongs to the transient receptor (TC 1.A.4) family. TrpV subfamily. TRPV2 sub-subfamily. As to quaternary structure, homotetramer. Interacts with a cAMP-dependent protein kinase type II regulatory subunit (PRKAR2A or PRKAR2B) and ACBD3. Interacts with SLC50A1; the interaction probably occurs intracellularly and depends on TRPV2 N-glycosylation. N-glycosylated. Post-translationally, phosphorylated by PKA. Abundantly expressed in spleen, placenta, skeleton muscle, lung and brain.

The protein localises to the cell membrane. Its subcellular location is the cytoplasm. The protein resides in the melanosome. It catalyses the reaction Ca(2+)(in) = Ca(2+)(out). The enzyme catalyses Mg(2+)(in) = Mg(2+)(out). The catalysed reaction is Na(+)(in) = Na(+)(out). It carries out the reaction K(+)(in) = K(+)(out). In terms of biological role, calcium-permeable, non-selective cation channel with an outward rectification. Seems to be regulated, at least in part, by IGF1, PDGF and neuropeptide head activator. May transduce physical stimuli in mast cells. Activated by temperatures higher than 52 degrees Celsius; is not activated by vanilloids and acidic pH. The protein is Transient receptor potential cation channel subfamily V member 2 (Trpv2) of Mus musculus (Mouse).